A 500-amino-acid polypeptide reads, in one-letter code: DNA double-strand break repair helicase HerA (500 aa).

ATP is bound by residues Arg142, 151-156 (GSGKSN), and 459-460 (KI).

Belongs to the HerA family. In terms of assembly, homohexamer. Forms a complex with NurA.

It catalyses the reaction Couples ATP hydrolysis with the unwinding of duplex DNA at the replication fork by translocating in the 5'-3' direction. This creates two antiparallel DNA single strands (ssDNA). The leading ssDNA polymer is the template for DNA polymerase III holoenzyme which synthesizes a continuous strand.. The catalysed reaction is ATP + H2O = ADP + phosphate + H(+). It carries out the reaction Couples ATP hydrolysis with the unwinding of duplex DNA by translocating in the 3'-5' direction.. With respect to regulation, ATPase activity is stimulated in the presence of linear double-stranded (ds)DNA. Helicase activity requires the presence of NurA. LhrC-Core (Hel112) inhibits the exonuclease activity of the HerA-NurA complex on ss- and dsDNA, has no effect on the nicking activity of NurA. Functionally, involved in DNA double-strand break (DSB) repair. Probably acts with NurA to stimulate resection of the 5' strand and produce the long 3' single-strand that is required for RadA loading. NurA and HerA together stimulate the end-resection of six nucleotides of a linear DNA substrate. Has DNA-dependent ATPase activity and bidirectional DNA helicase activity. Preferentially binds single stranded (ss)DNA, bubble and semiforked DNA substrate over other DNA molecules tested. Stimulates the exo- but not endonuclease activity of NurA. The sequence is that of DNA double-strand break repair helicase HerA from Saccharolobus solfataricus (strain ATCC 35092 / DSM 1617 / JCM 11322 / P2) (Sulfolobus solfataricus).